The chain runs to 337 residues: MDAFKTHLAIVASGAPLSREQARAAFDDLLSGEVTPIQAGAFLTALSVRGESEDEIVGAVSAMRARMLPVAAPEGAIDIVGTGGDHSGSYNVSTLAAILTAACGVPVAKHGNRAATSRSGAADVLAALGVKIGLPPEALARCLSEAGLCFMFAQTHHGAMRHVAPVRTELPFRTIFNMLGPLSNPAGVTAQVFGVSRPAWAEPLTRVLATLGSRRVWTVHGSDGLDEITTTGPTAVVALENGAFRHFTLDPREVGLPLATLDDLRGGDPEHNAAALGAVLEGTRNAYRDIAVLNAGAGLVVAGAAGSLAEGVARAQEAIDSGAARGTLARLVAVSNA.

5-phospho-alpha-D-ribose 1-diphosphate is bound by residues Gly81, 84–85 (GD), Ser89, 91–94 (NVST), 109–117 (KHGNRAATS), and Ala121. Gly81 contacts anthranilate. Residue Ser93 coordinates Mg(2+). Residue Asn112 participates in anthranilate binding. Position 167 (Arg167) interacts with anthranilate. Residues Asp226 and Glu227 each contribute to the Mg(2+) site.

It belongs to the anthranilate phosphoribosyltransferase family. In terms of assembly, homodimer. Requires Mg(2+) as cofactor.

It carries out the reaction N-(5-phospho-beta-D-ribosyl)anthranilate + diphosphate = 5-phospho-alpha-D-ribose 1-diphosphate + anthranilate. Its pathway is amino-acid biosynthesis; L-tryptophan biosynthesis; L-tryptophan from chorismate: step 2/5. Catalyzes the transfer of the phosphoribosyl group of 5-phosphorylribose-1-pyrophosphate (PRPP) to anthranilate to yield N-(5'-phosphoribosyl)-anthranilate (PRA). This is Anthranilate phosphoribosyltransferase from Methylorubrum extorquens (strain PA1) (Methylobacterium extorquens).